Reading from the N-terminus, the 176-residue chain is Crossover junction endodeoxyribonuclease RuvC (176 aa).

Active-site residues include aspartate 12, glutamate 72, and aspartate 144. 3 residues coordinate Mg(2+): aspartate 12, glutamate 72, and aspartate 144.

This sequence belongs to the RuvC family. As to quaternary structure, homodimer which binds Holliday junction (HJ) DNA. The HJ becomes 2-fold symmetrical on binding to RuvC with unstacked arms; it has a different conformation from HJ DNA in complex with RuvA. In the full resolvosome a probable DNA-RuvA(4)-RuvB(12)-RuvC(2) complex forms which resolves the HJ. Requires Mg(2+) as cofactor.

The protein resides in the cytoplasm. It carries out the reaction Endonucleolytic cleavage at a junction such as a reciprocal single-stranded crossover between two homologous DNA duplexes (Holliday junction).. In terms of biological role, the RuvA-RuvB-RuvC complex processes Holliday junction (HJ) DNA during genetic recombination and DNA repair. Endonuclease that resolves HJ intermediates. Cleaves cruciform DNA by making single-stranded nicks across the HJ at symmetrical positions within the homologous arms, yielding a 5'-phosphate and a 3'-hydroxyl group; requires a central core of homology in the junction. The consensus cleavage sequence is 5'-(A/T)TT(C/G)-3'. Cleavage occurs on the 3'-side of the TT dinucleotide at the point of strand exchange. HJ branch migration catalyzed by RuvA-RuvB allows RuvC to scan DNA until it finds its consensus sequence, where it cleaves and resolves the cruciform DNA. The polypeptide is Crossover junction endodeoxyribonuclease RuvC (Methylocella silvestris (strain DSM 15510 / CIP 108128 / LMG 27833 / NCIMB 13906 / BL2)).